Here is a 252-residue protein sequence, read N- to C-terminus: Small ribosomal subunit protein uS3 (252 aa).

The region spanning 39 to 111 (IRKLINNFTK…DVNLNVLEVK (73 aa)) is the KH type-2 domain. Positions 222–252 (KPFASQSSNTPNRRPRNFKGGNNNHVNAKKN) are disordered. Residues 241 to 252 (GGNNNHVNAKKN) are compositionally biased toward polar residues.

It belongs to the universal ribosomal protein uS3 family. Part of the 30S ribosomal subunit. Forms a tight complex with proteins S10 and S14.

In terms of biological role, binds the lower part of the 30S subunit head. Binds mRNA in the 70S ribosome, positioning it for translation. This is Small ribosomal subunit protein uS3 from Onion yellows phytoplasma (strain OY-M).